A 1464-amino-acid chain; its full sequence is Glutamate receptor ionotropic, NMDA 2A (1464 aa).

An N-terminal signal peptide occupies residues M1 to A22. The Extracellular portion of the chain corresponds to P23–S556. H44 serves as a coordination point for Zn(2+). N75 carries N-linked (GlcNAc...) asparagine glycosylation. The cysteines at positions 87 and 320 are disulfide-linked. Residues H128, E266, and D282 each contribute to the Zn(2+) site. 4 N-linked (GlcNAc...) asparagine glycosylation sites follow: N340, N380, N443, and N444. 2 disulfide bridges follow: C429/C455 and C436/C456. S511, T513, and R518 together coordinate L-glutamate. Residue N541 is glycosylated (N-linked (GlcNAc...) asparagine). The chain crosses the membrane as a helical span at residues V557–F576. Over E577 to T600 the chain is Cytoplasmic. A pore-forming region spans residues F599–Q620. Residues I601 to N615 constitute an intramembrane region (discontinuously helical). The Cytoplasmic portion of the chain corresponds to S616–T625. Residues T626–T646 form a helical membrane-spanning segment. At A647–I814 the chain is on the extracellular side. N-linked (GlcNAc...) asparagine glycosylation occurs at N687. L-glutamate contacts are provided by S689, T690, and D731. C745 and C800 form a disulfide bridge. Residues D815–F835 traverse the membrane as a helical segment. At I836–V1464 the chain is on the cytoplasmic side. Residues S882, S890, and S929 each carry the phosphoserine modification. 2 stretches are compositionally biased toward polar residues: residues E997–P1010 and Q1023–S1032. The segment at E997–K1083 is disordered. A Phosphoserine modification is found at S1025. 2 stretches are compositionally biased toward basic and acidic residues: residues Q1033–T1043 and L1052–I1061. Phosphoserine is present on residues S1059 and S1062. Positions C1070–K1083 are enriched in basic and acidic residues. 2 positions are modified to phosphoserine: S1198 and S1291. The interval K1335 to R1372 is disordered. Positions S1462–V1464 match the PDZ-binding motif.

Belongs to the glutamate-gated ion channel (TC 1.A.10.1) family. NR2A/GRIN2A subfamily. In terms of assembly, heterotetramer. Forms heterotetrameric channels composed of two GluN1/zeta subunits (GRIN1), and two identical GluN2/epsilon subunits (GRIN2A, GRIN2B, GRIN2C or GRIN2D) or GluN3 subunits (GRIN3A or GRIN3B) (in vitro). Can also form heterotetrameric channels that contain at least two GluN1 subunits and at least two different GluN2 subunits (or a combination of one GluN2 and one GluN3 subunits) (in vitro). In vivo, the subunit composition may depend on the expression levels of the different subunits. Found in a complex with GRIN1, GRIN3A and PPP2CB. Found in a complex with GRIN1 and GRIN3B. Interacts with AIP1. Interacts with HIP1 and NETO1. Interacts with SNX27 (via PDZ domain); the interaction is required for recycling to the plasma membrane when endocytosed and prevent degradation in lysosomes. Interacts with PDZ domains of PATJ and DLG4. Interacts with LRFN2. Interacts with RPH3A and DLG4; this ternary complex regulates NMDA receptor composition at postsynaptic membranes. Interacts with SORCS2. Interacts with ARC; preventing ARC oligomerization. Interacts (via the extreme C-terminus) with FRMPD2 (the second PDZ domain); the interaction is direct and is likely to promote NMDAR-mediated neural signal transmission. GRIN2A binds FRMPD2 with lower affinity than GRIN2B.

The protein localises to the cell projection. Its subcellular location is the dendritic spine. The protein resides in the cell membrane. It is found in the synapse. It localises to the postsynaptic cell membrane. The protein localises to the cytoplasmic vesicle membrane. The enzyme catalyses Ca(2+)(in) = Ca(2+)(out). It catalyses the reaction Na(+)(in) = Na(+)(out). It carries out the reaction K(+)(in) = K(+)(out). Its activity is regulated as follows. NMDA glutamate receptor activity is inhibited by endogenous Mg(2+) in a voltage-dependent manner. NMDA glutamate receptor activity is inhibited by endogenous Zn(2+). NMDA glutamate receptor activity is inhibited by endogenous protons. In terms of biological role, component of N-methyl-D-aspartate (NMDA) receptors (NMDARs) that function as heterotetrameric, ligand-gated cation channels with high calcium permeability and voltage-dependent block by Mg(2+). NMDARs participate in synaptic plasticity for learning and memory formation by contributing to the slow phase of excitatory postsynaptic current, long-term synaptic potentiation, and learning. Channel activation requires binding of the neurotransmitter L-glutamate to the GluN2 subunit, glycine or D-serine binding to the GluN1 subunit, plus membrane depolarization to eliminate channel inhibition by Mg(2+). NMDARs mediate simultaneously the potasium efflux and the influx of calcium and sodium. Each GluN2 subunit confers differential attributes to channel properties, including activation, deactivation and desensitization kinetics, pH sensitivity, Ca2(+) permeability, and binding to allosteric modulators. Participates in the synaptic plasticity regulation through activation by the L-glutamate releaseed by BEST1, into the synaptic cleft, upon F2R/PAR-1 activation in astrocyte. This is Glutamate receptor ionotropic, NMDA 2A from Homo sapiens (Human).